Reading from the N-terminus, the 354-residue chain is MQITKQLWSKAVTKAPLLPLPTKTKVSLAYKLHMPNKTVTPNLTIRSHEPIVFLHGVFGSKKNYGDICQTIANTTHTPVYAIDFRNHGESEHCFPLVNYSQLSKDVVDFCEEHDLKRVSIVGYSLGAKVGLLTMLKHPKLVNSGVIIGNAPIETPQVKVYLKVFLKAMTALIDSAHIKATDKNWREKARAVMSKYIPDASIVQYLLRNVLNKKSSHIPGHTDLISVQMPISHFNKDVIDDISDWPAEEVKGLKFEGPVKVVKGLKSAFITKEGEKAYAEHFPNYTMSTFNTNHLIFAEMPSRVTKTVCDFIKLTRYQLLQQHTRDGKHHTIQKVDPALLNSSEASTVEQATKQL.

Residues Ser-124 and His-293 each act as charge relay system in the active site.

The protein belongs to the AB hydrolase superfamily.

Functionally, probable alcohol acetyltransferase that uses acetyl-CoA to synthesize acetate esters from various alcohols. Not involved in the synthesis of ethyl acetate. This Cyberlindnera jadinii (strain ATCC 18201 / CBS 1600 / BCRC 20928 / JCM 3617 / NBRC 0987 / NRRL Y-1542) (Torula yeast) protein is Probable alcohol acetyltransferase (EAT2).